Consider the following 397-residue polypeptide: Succinate--CoA ligase [ADP-forming] subunit beta (397 aa).

Positions 9-254 (KALLKSFGAP…TTEEDEKEIE (246 aa)) constitute an ATP-grasp domain. Residues Lys-46, 53-55 (GRG), Glu-109, Ala-112, and Glu-117 each bind ATP. Residues Asn-209 and Asp-223 each contribute to the Mg(2+) site. Residues Asn-274 and 331–333 (GIM) each bind substrate.

It belongs to the succinate/malate CoA ligase beta subunit family. As to quaternary structure, heterotetramer of two alpha and two beta subunits. The cofactor is Mg(2+).

The catalysed reaction is succinate + ATP + CoA = succinyl-CoA + ADP + phosphate. It carries out the reaction GTP + succinate + CoA = succinyl-CoA + GDP + phosphate. Its pathway is carbohydrate metabolism; tricarboxylic acid cycle; succinate from succinyl-CoA (ligase route): step 1/1. Its function is as follows. Succinyl-CoA synthetase functions in the citric acid cycle (TCA), coupling the hydrolysis of succinyl-CoA to the synthesis of either ATP or GTP and thus represents the only step of substrate-level phosphorylation in the TCA. The beta subunit provides nucleotide specificity of the enzyme and binds the substrate succinate, while the binding sites for coenzyme A and phosphate are found in the alpha subunit. The polypeptide is Succinate--CoA ligase [ADP-forming] subunit beta (Mesorhizobium japonicum (strain LMG 29417 / CECT 9101 / MAFF 303099) (Mesorhizobium loti (strain MAFF 303099))).